A 602-amino-acid chain; its full sequence is MQSERQKHIRNFCIVAHIDHGKSTLADRLLEHTGTLTHREMEEQVLDNMEIERERGITIKSQAARLIYKRPEDGQEYILNLIDTPGHVDFNYEVSRSLAACEGAVLVVDATQGIQAQTLANCYMAVDHGLEVVPVINKIDLPSARPDEIKNEIEDVIGIESSDAPLISAKTGLNIEDVLEAVVQKVPAPSGDEKGPLKALIFDSYYDSYKGVVCHIRIKDGTVKAGTRIKLMAANKEYEVIEVGVFVPNYLKVEELKAGDVGYITASIKNVRDARVGDTITEVNNPAKEPLLGYRPAISMVYSGIYPIDSSKYEELKEALEKLQVNDAALNFEPETSIALGFGFRCGFLGLLHMEIMQERIEKEFNLDVIMTAPSVIYKVKKTDGTLIEITNPTNLPEPTEIDYMEEPVVKAQIITPSDFVGAVMELCQNKRGTFIDMEYIETTRVMLNYRVPLNEIIYDFFDSLKSRTKGYASFDYELDGYMRTELVKLDIILNSEVVDALSMIVPKDRAYAKGRTMAEKLKEIIPRQLFEIPIQAAVGSKIIARETVKALRKDVLAKCYGGDISRKRKLLEKQKEGKKRMRQVGSVEVPQEAFMSILKND.

Residues 7–190 (KHIRNFCIVA…AVVQKVPAPS (184 aa)) enclose the tr-type G domain. Residues 19 to 24 (DHGKST) and 137 to 140 (NKID) each bind GTP.

It belongs to the TRAFAC class translation factor GTPase superfamily. Classic translation factor GTPase family. LepA subfamily.

The protein resides in the cell membrane. The catalysed reaction is GTP + H2O = GDP + phosphate + H(+). In terms of biological role, required for accurate and efficient protein synthesis under certain stress conditions. May act as a fidelity factor of the translation reaction, by catalyzing a one-codon backward translocation of tRNAs on improperly translocated ribosomes. Back-translocation proceeds from a post-translocation (POST) complex to a pre-translocation (PRE) complex, thus giving elongation factor G a second chance to translocate the tRNAs correctly. Binds to ribosomes in a GTP-dependent manner. The sequence is that of Elongation factor 4 from Clostridium acetobutylicum (strain ATCC 824 / DSM 792 / JCM 1419 / IAM 19013 / LMG 5710 / NBRC 13948 / NRRL B-527 / VKM B-1787 / 2291 / W).